Reading from the N-terminus, the 427-residue chain is Glutamate-1-semialdehyde 2,1-aminomutase (427 aa).

Lys265 carries the N6-(pyridoxal phosphate)lysine modification.

Belongs to the class-III pyridoxal-phosphate-dependent aminotransferase family. HemL subfamily. In terms of assembly, homodimer. Requires pyridoxal 5'-phosphate as cofactor.

It is found in the cytoplasm. The enzyme catalyses (S)-4-amino-5-oxopentanoate = 5-aminolevulinate. It participates in porphyrin-containing compound metabolism; protoporphyrin-IX biosynthesis; 5-aminolevulinate from L-glutamyl-tRNA(Glu): step 2/2. This Neisseria meningitidis serogroup C / serotype 2a (strain ATCC 700532 / DSM 15464 / FAM18) protein is Glutamate-1-semialdehyde 2,1-aminomutase.